A 633-amino-acid chain; its full sequence is Chaperone protein HtpG (633 aa).

Positions 1-341 are a; substrate-binding; it reads MTAPHETMSF…SADLPLNVSR (341 aa). Residues 342–562 are b; the sequence is ELLQESRDVK…DGDMSGYLQR (221 aa). The c stretch occupies residues 563–633; it reads LLKQAGQKAP…YVQRVNRLLA (71 aa).

This sequence belongs to the heat shock protein 90 family. In terms of assembly, homodimer.

The protein localises to the cytoplasm. Molecular chaperone. Has ATPase activity. In Cupriavidus metallidurans (strain ATCC 43123 / DSM 2839 / NBRC 102507 / CH34) (Ralstonia metallidurans), this protein is Chaperone protein HtpG.